The primary structure comprises 368 residues: UDP-N-acetylenolpyruvoylglucosamine reductase (368 aa).

One can recognise an FAD-binding PCMH-type domain in the interval 32 to 199; sequence IGGKPRSAVR…LAIELQLLTD (168 aa). R177 is a catalytic residue. S257 serves as the catalytic Proton donor. E358 is a catalytic residue.

The protein belongs to the MurB family. FAD serves as cofactor.

It localises to the cytoplasm. It catalyses the reaction UDP-N-acetyl-alpha-D-muramate + NADP(+) = UDP-N-acetyl-3-O-(1-carboxyvinyl)-alpha-D-glucosamine + NADPH + H(+). Its pathway is cell wall biogenesis; peptidoglycan biosynthesis. Cell wall formation. The protein is UDP-N-acetylenolpyruvoylglucosamine reductase of Corynebacterium glutamicum (strain R).